The sequence spans 205 residues: N-(5'-phosphoribosyl)anthranilate isomerase (205 aa).

It belongs to the TrpF family. In terms of assembly, homodimer.

The enzyme catalyses N-(5-phospho-beta-D-ribosyl)anthranilate = 1-(2-carboxyphenylamino)-1-deoxy-D-ribulose 5-phosphate. The protein operates within amino-acid biosynthesis; L-tryptophan biosynthesis; L-tryptophan from chorismate: step 3/5. The polypeptide is N-(5'-phosphoribosyl)anthranilate isomerase (trpF) (Thermotoga maritima (strain ATCC 43589 / DSM 3109 / JCM 10099 / NBRC 100826 / MSB8)).